Reading from the N-terminus, the 473-residue chain is ATP synthase subunit beta (473 aa).

153–160 contacts ATP; the sequence is GGAGVGKT.

The protein belongs to the ATPase alpha/beta chains family. F-type ATPases have 2 components, CF(1) - the catalytic core - and CF(0) - the membrane proton channel. CF(1) has five subunits: alpha(3), beta(3), gamma(1), delta(1), epsilon(1). CF(0) has three main subunits: a(1), b(2) and c(9-12). The alpha and beta chains form an alternating ring which encloses part of the gamma chain. CF(1) is attached to CF(0) by a central stalk formed by the gamma and epsilon chains, while a peripheral stalk is formed by the delta and b chains.

The protein localises to the cell inner membrane. It catalyses the reaction ATP + H2O + 4 H(+)(in) = ADP + phosphate + 5 H(+)(out). Functionally, produces ATP from ADP in the presence of a proton gradient across the membrane. The catalytic sites are hosted primarily by the beta subunits. The chain is ATP synthase subunit beta from Rickettsia rickettsii (strain Iowa).